The following is a 437-amino-acid chain: Chloride intracellular channel protein 5 (437 aa).

Residues 1–14 (MNDENYSTTIYNRV) show a composition bias toward polar residues. A disordered region spans residues 1–197 (MNDENYSTTI…VSEGNESASA (197 aa)). The segment covering 34-45 (DEVHEDVRREDN) has biased composition (basic and acidic residues). 4 consecutive repeat copies span residues 118 to 125 (QSDSEEPQ), 126 to 133 (ASDPEEPQ), 134 to 141 (ASDPEEPQ), and 142 to 149 (GPDPEEPQ). The 4 X 8 AA tandem repeats of [AGQ]-[SP]-D-[PS]-E-E-P-Q stretch occupies residues 118-149 (QSDSEEPQASDPEEPQASDPEEPQGPDPEEPQ). The span at 121-157 (SEEPQASDPEEPQASDPEEPQGPDPEEPQENGNEMEA) shows a compositional bias: acidic residues. The segment covering 161 to 184 (SPSSFTIQNSRAFSTREISPTSYS) has biased composition (polar residues). The G-site signature appears at 217–220 (CPFS). A helical transmembrane segment spans residues 219-239 (FSQRLFMILWLKGVVFNVTTV). The 165-residue stretch at 263–427 (NGDVKTDVNK…AADSEIELAY (165 aa)) folds into the GST C-terminal domain.

Belongs to the chloride channel CLIC family. In terms of assembly, component of a multimeric complex consisting of several cytoskeletal proteins, including actin, ezrin, alpha-actinin, gelsolin, and IQGAP1. Interacts with AKAP9. Interacts with TPRN. TPRN, CLIC5 and PTPQR form concentric rings at the base of stereocilia and may form a complex. Interacts with EZR, MYO6 and RDX; the proteins may work together as a complex to stabilize linkages between the plasma membrane and subjacent actin cytoskeleton at the stereocilium base. In terms of processing, phosphorylated. As to expression, expressed in most tissues. Higher levels found in kidney, heart, skeletal muscle, T84 and PANC-1 cells.

It localises to the golgi apparatus. It is found in the cytoplasm. Its subcellular location is the cytoskeleton. The protein resides in the microtubule organizing center. The protein localises to the centrosome. It localises to the cell cortex. It is found in the membrane. Its subcellular location is the apical cell membrane. The protein resides in the mitochondrion. The protein localises to the cell projection. It localises to the stereocilium. It catalyses the reaction Na(+)(in) = Na(+)(out). It carries out the reaction K(+)(in) = K(+)(out). The catalysed reaction is chloride(in) = chloride(out). Its activity is regulated as follows. Inhibited by F-actin. Its function is as follows. In the soluble state, catalyzes glutaredoxin-like thiol disulfide exchange reactions with reduced glutathione as electron donor. Can insert into membranes and form non-selective ion channels almost equally permeable to Na(+), K(+) and Cl(-). Required for normal hearing. It is necessary for the formation of stereocilia in the inner ear and normal development of the organ of Corti. May play a role in the regulation of transepithelial ion absorption and secretion. Is required for the development and/or maintenance of the proper glomerular endothelial cell and podocyte architecture. Plays a role in formation of the lens suture in the eye, which is important for normal optical properties of the lens. The chain is Chloride intracellular channel protein 5 (CLIC5) from Bos taurus (Bovine).